The chain runs to 199 residues: NAD(P)H dehydrogenase (quinone) (199 aa).

One can recognise a Flavodoxin-like domain in the interval Val-4–Val-190. FMN is bound by residues Ser-10–Ile-15 and Thr-79–Phe-81. An NAD(+)-binding site is contributed by Tyr-12. Trp-99 contributes to the substrate binding site. Residue His-134 participates in FMN binding.

The protein belongs to the WrbA family. FMN is required as a cofactor.

It catalyses the reaction a quinone + NADH + H(+) = a quinol + NAD(+). The catalysed reaction is a quinone + NADPH + H(+) = a quinol + NADP(+). The chain is NAD(P)H dehydrogenase (quinone) from Tolumonas auensis (strain DSM 9187 / NBRC 110442 / TA 4).